The chain runs to 156 residues: Putative pre-16S rRNA nuclease (156 aa).

This sequence belongs to the YqgF nuclease family.

It localises to the cytoplasm. In terms of biological role, could be a nuclease involved in processing of the 5'-end of pre-16S rRNA. In Albidiferax ferrireducens (strain ATCC BAA-621 / DSM 15236 / T118) (Rhodoferax ferrireducens), this protein is Putative pre-16S rRNA nuclease.